Reading from the N-terminus, the 59-residue chain is SPbeta prophage-derived uncharacterized protein YosB (59 aa).

The chain is SPbeta prophage-derived uncharacterized protein YosB (yosB) from Bacillus subtilis (strain 168).